We begin with the raw amino-acid sequence, 275 residues long: Formamidopyrimidine-DNA glycosylase (275 aa).

Proline 2 acts as the Schiff-base intermediate with DNA in catalysis. The active-site Proton donor is the glutamate 3. The active-site Proton donor; for beta-elimination activity is lysine 58. Residues histidine 91, arginine 109, and lysine 154 each coordinate DNA. Residues 240-274 (AVYERAGLACRVCGTPIRRLVQGQRATYFCPHCQK) form an FPG-type zinc finger. The active-site Proton donor; for delta-elimination activity is arginine 264.

The protein belongs to the FPG family. Monomer. Zn(2+) serves as cofactor.

The catalysed reaction is Hydrolysis of DNA containing ring-opened 7-methylguanine residues, releasing 2,6-diamino-4-hydroxy-5-(N-methyl)formamidopyrimidine.. It carries out the reaction 2'-deoxyribonucleotide-(2'-deoxyribose 5'-phosphate)-2'-deoxyribonucleotide-DNA = a 3'-end 2'-deoxyribonucleotide-(2,3-dehydro-2,3-deoxyribose 5'-phosphate)-DNA + a 5'-end 5'-phospho-2'-deoxyribonucleoside-DNA + H(+). In terms of biological role, involved in base excision repair of DNA damaged by oxidation or by mutagenic agents. Acts as a DNA glycosylase that recognizes and removes damaged bases. Has a preference for oxidized purines, such as 7,8-dihydro-8-oxoguanine (8-oxoG). Has AP (apurinic/apyrimidinic) lyase activity and introduces nicks in the DNA strand. Cleaves the DNA backbone by beta-delta elimination to generate a single-strand break at the site of the removed base with both 3'- and 5'-phosphates. The sequence is that of Formamidopyrimidine-DNA glycosylase from Bordetella avium (strain 197N).